A 512-amino-acid polypeptide reads, in one-letter code: Serine/threonine-protein kinase BSK1 (512 aa).

A lipid anchor (N-myristoyl glycine) is attached at Gly2. The disordered stretch occupies residues 8-48; it reads FSGDNPLGKDGVQPQPLSQNNHGGATTADNGGSGGASGVGG. The span at 38-48 shows a compositional bias: gly residues; the sequence is GGSGGASGVGG. The Protein kinase domain maps to 76-331; that stretch reads DNIVSESGEK…DLVATLAPLQ (256 aa). Residues 82–90 and Lys104 contribute to the ATP site; that span reads SGEKAPNLV. Residue Asp198 is the Proton acceptor of the active site. The residue at position 230 (Ser230) is a Phosphoserine. A coiled-coil region spans residues 483 to 508; it reads AKLNMNTDAADMLNEAAQLEEKRQRG.

The protein belongs to the protein kinase superfamily. Ser/Thr protein kinase family. Interacts with BRI1. Interacts with ASK7/BIN2, BSK5, BSK6, BSK8 and BSK11. Interacts with FLS2. Phosphorylated at Ser-230 by BRI1 upon brassinolide (BL) treatment. Phosphorylation at Ser-230 weakens the interaction between BSK1 and BRI1. Phosphorylated by ASK7/BIN2 and ASK9/BIL2.

The protein localises to the cell membrane. The enzyme catalyses L-seryl-[protein] + ATP = O-phospho-L-seryl-[protein] + ADP + H(+). It catalyses the reaction L-threonyl-[protein] + ATP = O-phospho-L-threonyl-[protein] + ADP + H(+). Functionally, serine/threonine kinase that acts as a positive regulator of brassinosteroid (BR) signaling downstream of the receptor kinase BRI1. Mediates signal transduction from BRI1 by functioning as substrate of BRI1. Functions as a positive regulator of plant immunity. May be involved in the regulation of pattern-triggered immunity (PTI) downstream of the flagellin receptor FLS2. Possesses kinase activity in vitro. Kinase activity is required for its function in innate immunity. The sequence is that of Serine/threonine-protein kinase BSK1 from Arabidopsis thaliana (Mouse-ear cress).